A 347-amino-acid polypeptide reads, in one-letter code: Dihydroorotase (347 aa).

H13 and H15 together coordinate Zn(2+). Residues 15-17 and N41 contribute to the substrate site; that span reads HLR. 3 residues coordinate Zn(2+): K99, H136, and H174. The residue at position 99 (K99) is an N6-carboxylysine. A substrate-binding site is contributed by H136. Substrate is bound at residue L219. D247 lines the Zn(2+) pocket. The active site involves D247. Residues H251 and A263 each contribute to the substrate site.

This sequence belongs to the metallo-dependent hydrolases superfamily. DHOase family. Class II DHOase subfamily. Homodimer. Requires Zn(2+) as cofactor.

It carries out the reaction (S)-dihydroorotate + H2O = N-carbamoyl-L-aspartate + H(+). Its pathway is pyrimidine metabolism; UMP biosynthesis via de novo pathway; (S)-dihydroorotate from bicarbonate: step 3/3. In terms of biological role, catalyzes the reversible cyclization of carbamoyl aspartate to dihydroorotate. In Rhizobium meliloti (strain 1021) (Ensifer meliloti), this protein is Dihydroorotase.